The following is a 174-amino-acid chain: Disulfide bond formation protein B (174 aa).

The Cytoplasmic segment spans residues 1 to 14 (MLNFLNICSKTRKS). A helical membrane pass occupies residues 15–31 (WVLLIFTVVILELIALY). The Periplasmic segment spans residues 32–49 (LQHIVLIKPCVLCVYQRC). A disulfide bridge connects residues Cys41 and Cys44. A helical transmembrane segment spans residues 50-65 (ALCGIGIAGLIGTIAP). At 66–71 (FTPLRF) the chain is on the cytoplasmic side. Residues 72 to 89 (FSIPIWIYSAWKGLLLAK) form a helical membrane-spanning segment. The Periplasmic segment spans residues 90 to 144 (EYTDIQLHPSPFFMCDLFVQFPHWLPLNKWWPSMFDADGDCAEYKWYFLSLEISQ). Cys104 and Cys130 are disulfide-bonded. A helical membrane pass occupies residues 145–163 (WMLIIFANYLIIAILVSLS). At 164-174 (QIIDLKKWNNK) the chain is on the cytoplasmic side.

The protein belongs to the DsbB family.

The protein localises to the cell inner membrane. In terms of biological role, required for disulfide bond formation in some periplasmic proteins. Acts by oxidizing the DsbA protein. This is Disulfide bond formation protein B from Blochmanniella pennsylvanica (strain BPEN).